The sequence spans 699 residues: Elongation factor G (699 aa).

One can recognise a tr-type G domain in the interval 8 to 288; sequence EDYRNFGIMA…AVVDYLPSPI (281 aa). Residues 17–24, 86–90, and 140–143 contribute to the GTP site; these read AHIDAGKT, DTPGH, and NKMD.

The protein belongs to the TRAFAC class translation factor GTPase superfamily. Classic translation factor GTPase family. EF-G/EF-2 subfamily.

The protein localises to the cytoplasm. Functionally, catalyzes the GTP-dependent ribosomal translocation step during translation elongation. During this step, the ribosome changes from the pre-translocational (PRE) to the post-translocational (POST) state as the newly formed A-site-bound peptidyl-tRNA and P-site-bound deacylated tRNA move to the P and E sites, respectively. Catalyzes the coordinated movement of the two tRNA molecules, the mRNA and conformational changes in the ribosome. This Rhizobium meliloti (strain 1021) (Ensifer meliloti) protein is Elongation factor G.